Consider the following 235-residue polypeptide: Photosystem I assembly protein Ycf4 (235 aa).

Helical transmembrane passes span 21–43 and 63–85; these read NLCWACILFLGSLGFLLVGTSSY and GIVMSFYGIAGLFISSYLWCTIL.

Belongs to the Ycf4 family.

The protein resides in the plastid. It localises to the chloroplast thylakoid membrane. Seems to be required for the assembly of the photosystem I complex. This chain is Photosystem I assembly protein Ycf4, found in Amborella trichopoda.